Reading from the N-terminus, the 162-residue chain is Transcription elongation factor GreA (162 aa).

Residues 9–38 (QGYKALEEELARLKSERPEIIQAIKEAREE) adopt a coiled-coil conformation.

This sequence belongs to the GreA/GreB family.

In terms of biological role, necessary for efficient RNA polymerase transcription elongation past template-encoded arresting sites. The arresting sites in DNA have the property of trapping a certain fraction of elongating RNA polymerases that pass through, resulting in locked ternary complexes. Cleavage of the nascent transcript by cleavage factors such as GreA or GreB allows the resumption of elongation from the new 3'terminus. GreA releases sequences of 2 to 3 nucleotides. The sequence is that of Transcription elongation factor GreA from Desulfovibrio desulfuricans (strain ATCC 27774 / DSM 6949 / MB).